The chain runs to 793 residues: Endonuclease MutS2 (793 aa).

329 to 336 (GPNTGGKT) is an ATP binding site. The interval 611–639 (LARARQAVEPTEEEQRARRRGEVPRGLKP) is disordered. Over residues 623–639 (EEQRARRRGEVPRGLKP) the composition is skewed to basic and acidic residues. The Smr domain maps to 717–792 (VDLRGLMVEE…GDGVTVAKLR (76 aa)).

Belongs to the DNA mismatch repair MutS family. MutS2 subfamily. In terms of assembly, homodimer. Binds to stalled ribosomes, contacting rRNA.

Its function is as follows. Endonuclease that is involved in the suppression of homologous recombination and thus may have a key role in the control of bacterial genetic diversity. In terms of biological role, acts as a ribosome collision sensor, splitting the ribosome into its 2 subunits. Detects stalled/collided 70S ribosomes which it binds and splits by an ATP-hydrolysis driven conformational change. Acts upstream of the ribosome quality control system (RQC), a ribosome-associated complex that mediates the extraction of incompletely synthesized nascent chains from stalled ribosomes and their subsequent degradation. Probably generates substrates for RQC. The protein is Endonuclease MutS2 of Symbiobacterium thermophilum (strain DSM 24528 / JCM 14929 / IAM 14863 / T).